Here is a 308-residue protein sequence, read N- to C-terminus: Ribonuclease HIII (308 aa).

Residues 91–308 (KNVIGSDEVG…TEKALKMVKK (218 aa)) form the RNase H type-2 domain. Residues D97, E98, and D202 each coordinate a divalent metal cation.

This sequence belongs to the RNase HII family. RnhC subfamily. Requires Mn(2+) as cofactor. Mg(2+) is required as a cofactor.

The protein resides in the cytoplasm. It catalyses the reaction Endonucleolytic cleavage to 5'-phosphomonoester.. In terms of biological role, endonuclease that specifically degrades the RNA of RNA-DNA hybrids. In Listeria monocytogenes serotype 4b (strain F2365), this protein is Ribonuclease HIII.